The following is a 271-amino-acid chain: Transmembrane protein 33 homolog (271 aa).

Residues 1 to 32 (MVEIVEEPDDHQSSSTGAGSSGSSSAPPPPPP) form a disordered region. A compositionally biased stretch (low complexity) spans 13-25 (SSSTGAGSSGSSS). The next 3 membrane-spanning stretches (helical) occupy residues 56-76 (VLTVFFALNYMIPFIGLVPAH), 125-145 (VVFLMAAPVSMAALPVTIYAA), and 180-200 (ALGIIACSEIFLVPLLVSLIF).

This sequence belongs to the PER33/POM33 family.

It is found in the membrane. This is Transmembrane protein 33 homolog from Caenorhabditis elegans.